The following is a 568-amino-acid chain: 2-succinyl-5-enolpyruvyl-6-hydroxy-3-cyclohexene-1-carboxylate synthase (568 aa).

It belongs to the TPP enzyme family. MenD subfamily. As to quaternary structure, homodimer. It depends on Mg(2+) as a cofactor. Mn(2+) serves as cofactor. Requires thiamine diphosphate as cofactor.

The enzyme catalyses isochorismate + 2-oxoglutarate + H(+) = 5-enolpyruvoyl-6-hydroxy-2-succinyl-cyclohex-3-ene-1-carboxylate + CO2. The protein operates within quinol/quinone metabolism; 1,4-dihydroxy-2-naphthoate biosynthesis; 1,4-dihydroxy-2-naphthoate from chorismate: step 2/7. It participates in quinol/quinone metabolism; menaquinone biosynthesis. Its function is as follows. Catalyzes the thiamine diphosphate-dependent decarboxylation of 2-oxoglutarate and the subsequent addition of the resulting succinic semialdehyde-thiamine pyrophosphate anion to isochorismate to yield 2-succinyl-5-enolpyruvyl-6-hydroxy-3-cyclohexene-1-carboxylate (SEPHCHC). This Haemophilus influenzae (strain PittEE) protein is 2-succinyl-5-enolpyruvyl-6-hydroxy-3-cyclohexene-1-carboxylate synthase.